The sequence spans 117 residues: NADH-ubiquinone oxidoreductase chain 3 (117 aa).

Helical transmembrane passes span 5 to 25 (ALSSAIALLVPIIILGAAWVL), 57 to 77 (FFLLAIIFIVFDIEIVLLMPL), and 86 to 106 (VFTTVTTSVLFLMILLIGLIH).

It belongs to the complex I subunit 3 family.

It localises to the mitochondrion membrane. It catalyses the reaction a ubiquinone + NADH + 5 H(+)(in) = a ubiquinol + NAD(+) + 4 H(+)(out). Functionally, core subunit of the mitochondrial membrane respiratory chain NADH dehydrogenase (Complex I) that is believed to belong to the minimal assembly required for catalysis. Complex I functions in the transfer of electrons from NADH to the respiratory chain. The immediate electron acceptor for the enzyme is believed to be ubiquinone. This is NADH-ubiquinone oxidoreductase chain 3 (ND3) from Lumbricus terrestris (Common earthworm).